Consider the following 210-residue polypeptide: Na(+)-translocating NADH-quinone reductase subunit D (210 aa).

5 consecutive transmembrane segments (helical) span residues 42–62 (FVMT…VSLI), 72–92 (IIVQ…VLKA), 103–123 (VFVS…AFAM), 131–151 (FIDG…VAFF), and 178–198 (NGLM…IWAI).

This sequence belongs to the NqrDE/RnfAE family. Composed of six subunits; NqrA, NqrB, NqrC, NqrD, NqrE and NqrF.

Its subcellular location is the cell inner membrane. It carries out the reaction a ubiquinone + n Na(+)(in) + NADH + H(+) = a ubiquinol + n Na(+)(out) + NAD(+). In terms of biological role, NQR complex catalyzes the reduction of ubiquinone-1 to ubiquinol by two successive reactions, coupled with the transport of Na(+) ions from the cytoplasm to the periplasm. NqrA to NqrE are probably involved in the second step, the conversion of ubisemiquinone to ubiquinol. The chain is Na(+)-translocating NADH-quinone reductase subunit D from Aliivibrio fischeri (strain ATCC 700601 / ES114) (Vibrio fischeri).